The chain runs to 273 residues: MSLQNIIETAFENRADITPTTVAPEVKEAVLETIRQLDSGKLRVAERLGVGEWKVNEWAKKAVLLSFRIQDNEVLNDGVNKYFDKVPTKFADWSEDEFKNAGFRAVPGAVARRGSFVAKNAVLMPSYVNIGAYVDEGAMVDTWATVGSCAQIGKNVHLSGGVGIGGVLEPLQAAPTIIEDNCFIGARSEIVEGAIVEEGSVISMGVFIGQSTKIFDRTTGEIYQGRVPAGSVVVSGSLPSKDGSHSLYCAVIVKRVDAQTRAKTSVNELLRGI.

2 residues coordinate substrate: R104 and D141.

This sequence belongs to the transferase hexapeptide repeat family. Homotrimer.

It localises to the cytoplasm. It catalyses the reaction (S)-2,3,4,5-tetrahydrodipicolinate + succinyl-CoA + H2O = (S)-2-succinylamino-6-oxoheptanedioate + CoA. Its pathway is amino-acid biosynthesis; L-lysine biosynthesis via DAP pathway; LL-2,6-diaminopimelate from (S)-tetrahydrodipicolinate (succinylase route): step 1/3. The polypeptide is 2,3,4,5-tetrahydropyridine-2,6-dicarboxylate N-succinyltransferase (Neisseria gonorrhoeae (strain ATCC 700825 / FA 1090)).